Here is a 178-residue protein sequence, read N- to C-terminus: MVKLVATLGTSPGGVIESFLYLVKKGENIDEVRVVTTSNAEVKKAWRIVRLMFVCCIQEKFPKVEISEHPLDIEDIYSEDDLRKVREFVEKQLGEGDYLDITGGRKSMSVAAALAAKNKGVKIITSIIPQDDYNKISKKVRELKEIPEIKNRGECRQEMKETYCSLIVQDARSIEFEI.

The tract at residues 105 to 106 is transition state stabilizer; it reads RK.

It belongs to the cOA ring nuclease family. As to quaternary structure, homodimer. It depends on Does not require a metal cofactor. as a cofactor.

The protein resides in the cytoplasm. The enzyme catalyses cyclic tetraadenylate = 2 5'-hydroxy-diadenylate 2',3'-cylic phosphate. Functionally, CRISPR (clustered regularly interspaced short palindromic repeat) is an adaptive immune system that provides protection against mobile genetic elements (viruses, transposable elements and conjugative plasmids). CRISPR clusters contain spacers, sequences complementary to antecedent mobile elements, and target invading nucleic acids. CRISPR clusters are transcribed and processed into CRISPR RNA (crRNA). A nuclease that degrades cyclic oligoadenylates (cOA), second messengers that induce an antiviral state important for defense against invading nucleic acids. Destruction of cOA deactivates the Csx1 ribonuclease, preventing uncontrolled degradation of cellular RNA. Degrades cA4 (a tetraadenylate ring) into a linear diadenylate product with 5'-OH and 2',3'-cyclic phosphate termini. Is 10-fold more active than SSO1393, suggesting this is the major cA4 degradation enzyme. Is highly specific for cA4; it has very poor activity on cA6 and no discernible activity against a number of cyclic dinucleotides. There may be 2 active sites per homodimer. This is CRISPR system ring nuclease SSO2081 from Saccharolobus solfataricus (strain ATCC 35092 / DSM 1617 / JCM 11322 / P2) (Sulfolobus solfataricus).